The primary structure comprises 68 residues: Antimicrobial peptide Eval418 (68 aa).

The first 23 residues, 1–23, serve as a signal peptide directing secretion; that stretch reads MRTQLAVLLVALVLLQMIAQSEA. Position 36 is an isoleucine amide (Ile-36). The propeptide occupies 37 to 68; that stretch reads GKRGLRNLDDLDDVFDDDLSAADLEFLKQLMR.

It belongs to the non-disulfide-bridged peptide (NDBP) superfamily. Short antimicrobial peptide (group 4) family. In terms of tissue distribution, expressed by the venom gland.

It is found in the secreted. Probable antimicrobial peptide. Shows dose-dependent and time-dependent inactivation of herpes simplex virus type 1 (HSV-1) and dose-dependent inhibition of HSV-1 viral attachment to host cells. Scarcely suppress an established HSV-1 infection due to poor cellular uptake. This is Antimicrobial peptide Eval418 from Euscorpiops validus (Scorpion).